The following is a 522-amino-acid chain: Ribonuclease Y (522 aa).

The chain crosses the membrane as a helical span at residues 7–23 (SGSSAAVISGLVGFYIS). The 67-residue stretch at 212–278 (LTNLVHLNDD…TKTLELLIQD (67 aa)) folds into the KH domain. The HD domain maps to 338–431 (ALSHTLEVAH…VCAADALSAA (94 aa)).

Belongs to the RNase Y family.

It is found in the cell membrane. In terms of biological role, endoribonuclease that initiates mRNA decay. This is Ribonuclease Y from Sulfurimonas denitrificans (strain ATCC 33889 / DSM 1251) (Thiomicrospira denitrificans (strain ATCC 33889 / DSM 1251)).